The following is a 143-amino-acid chain: Large ribosomal subunit protein uL11 (143 aa).

Belongs to the universal ribosomal protein uL11 family. Part of the ribosomal stalk of the 50S ribosomal subunit. Interacts with L10 and the large rRNA to form the base of the stalk. L10 forms an elongated spine to which L12 dimers bind in a sequential fashion forming a multimeric L10(L12)X complex. In terms of processing, one or more lysine residues are methylated.

Forms part of the ribosomal stalk which helps the ribosome interact with GTP-bound translation factors. In Borrelia garinii subsp. bavariensis (strain ATCC BAA-2496 / DSM 23469 / PBi) (Borreliella bavariensis), this protein is Large ribosomal subunit protein uL11.